Here is a 1018-residue protein sequence, read N- to C-terminus: Antigenic heat-stable 120 kDa protein (1018 aa).

Residues 1-11 (MSKDGNLNTSE) are compositionally biased toward polar residues. Disordered stretches follow at residues 1–82 (MSKD…DPIT), 355–402 (GQSK…MPQS), and 995–1018 (RDSIQSENLNKSTPIKRESSPPQR). The segment covering 19-34 (EYTEEQKQTLEQEQKE) has biased composition (basic and acidic residues). Over residues 53–68 (TSASSAQSTPSTSALS) the composition is skewed to low complexity. Polar residues-rich tracts occupy residues 69–80 (GNISPDSQTSDP), 355–380 (GQSKEQPLITPQQTTSSSVEPPQYKQ), 387–402 (PTNQPLQPETSQMPQS), and 996–1007 (DSIQSENLNKST). Residues 1009–1018 (IKRESSPPQR) are compositionally biased toward basic and acidic residues.

It is found in the cytoplasm. This is Antigenic heat-stable 120 kDa protein (sca4) from Rickettsia japonica (strain ATCC VR-1363 / YH).